A 184-amino-acid polypeptide reads, in one-letter code: Photosystem I assembly protein Ycf4 (184 aa).

A run of 2 helical transmembrane segments spans residues 22–42 (FCWA…GISS) and 57–77 (ILFF…LFIS).

It belongs to the Ycf4 family.

The protein resides in the plastid. The protein localises to the chloroplast thylakoid membrane. In terms of biological role, seems to be required for the assembly of the photosystem I complex. This chain is Photosystem I assembly protein Ycf4, found in Populus trichocarpa (Western balsam poplar).